The sequence spans 185 residues: Elongation factor P (185 aa).

Belongs to the elongation factor P family.

It is found in the cytoplasm. It participates in protein biosynthesis; polypeptide chain elongation. Functionally, involved in peptide bond synthesis. Stimulates efficient translation and peptide-bond synthesis on native or reconstituted 70S ribosomes in vitro. Probably functions indirectly by altering the affinity of the ribosome for aminoacyl-tRNA, thus increasing their reactivity as acceptors for peptidyl transferase. The chain is Elongation factor P from Moorella thermoacetica (strain ATCC 39073 / JCM 9320).